Consider the following 257-residue polypeptide: Ribonuclease HII (257 aa).

The RNase H type-2 domain maps to Thr72–Lys257. A divalent metal cation is bound by residues Asp78, Glu79, and Asp170.

The protein belongs to the RNase HII family. Requires Mn(2+) as cofactor. Mg(2+) is required as a cofactor.

Its subcellular location is the cytoplasm. It catalyses the reaction Endonucleolytic cleavage to 5'-phosphomonoester.. Functionally, endonuclease that specifically degrades the RNA of RNA-DNA hybrids. The protein is Ribonuclease HII of Bacillus cereus (strain ZK / E33L).